Consider the following 503-residue polypeptide: AMP phosphorylase (503 aa).

AMP contacts are provided by residues G168, 194-199 (SRAITS), and T203. The Proton donor role is filled by D256. Residues S264 and K288 each coordinate AMP.

This sequence belongs to the thymidine/pyrimidine-nucleoside phosphorylase family. Type 2 subfamily.

It catalyses the reaction AMP + phosphate = alpha-D-ribose 1,5-bisphosphate + adenine. The enzyme catalyses CMP + phosphate = cytosine + alpha-D-ribose 1,5-bisphosphate. It carries out the reaction UMP + phosphate = alpha-D-ribose 1,5-bisphosphate + uracil. In terms of biological role, catalyzes the conversion of AMP and phosphate to adenine and ribose 1,5-bisphosphate (R15P). Exhibits phosphorylase activity toward CMP and UMP in addition to AMP. Functions in an archaeal AMP degradation pathway, together with R15P isomerase and RubisCO. The chain is AMP phosphorylase from Pyrococcus furiosus (strain ATCC 43587 / DSM 3638 / JCM 8422 / Vc1).